A 258-amino-acid polypeptide reads, in one-letter code: Aspartate/glutamate leucyltransferase (258 aa).

It belongs to the R-transferase family. Bpt subfamily.

It localises to the cytoplasm. It catalyses the reaction N-terminal L-glutamyl-[protein] + L-leucyl-tRNA(Leu) = N-terminal L-leucyl-L-glutamyl-[protein] + tRNA(Leu) + H(+). The enzyme catalyses N-terminal L-aspartyl-[protein] + L-leucyl-tRNA(Leu) = N-terminal L-leucyl-L-aspartyl-[protein] + tRNA(Leu) + H(+). Its function is as follows. Functions in the N-end rule pathway of protein degradation where it conjugates Leu from its aminoacyl-tRNA to the N-termini of proteins containing an N-terminal aspartate or glutamate. This is Aspartate/glutamate leucyltransferase from Rhizobium leguminosarum bv. trifolii (strain WSM2304).